The chain runs to 507 residues: Rhomboid protease GluP (507 aa).

Transmembrane regions (helical) follow at residues 179-199, 229-249, 261-281, 283-303, and 312-332; these read FTYLFIALQILMFFLLEINGG, IVLHIGIAHLAFNTLALWSVG, FLLIYLAAGITGSIASFVFSP, PSAGASGAIFGCLGALLYVAL, and TIGTNIIVIIIINLGFGFAVS. Catalysis depends on S288, which acts as the Nucleophile. Catalysis depends on H339, which acts as the Charge relay system. Transmembrane regions (helical) follow at residues 340–360 and 365–385; these read IGGLIGGFFAAAALGLPKAGA and LLSAVLLIALAVGFLYYGLHS. TPR repeat units follow at residues 424–457 and 458–491; these read ADLLKILAVSDIQIGEYDQAVSLLERAVKKEPKD and HASYYNLALLYAEKNELAQAEKAIQTAVKLKPKE.

This sequence belongs to the peptidase S54 family.

The protein localises to the cell membrane. The catalysed reaction is Cleaves type-1 transmembrane domains using a catalytic dyad composed of serine and histidine that are contributed by different transmembrane domains.. With respect to regulation, inhibited by dichloroisocoumarin (DCI) and N-p-tosyl-L-phenylalanine chloromethyl ketone (TPCK), but not by other serine protease inhibitors such as sulfonyl fluoride PMSF and 4-(2-aminoethyl)benzenesulfonyl fluoride (AEBSF). In terms of biological role, rhomboid-type serine protease that catalyzes intramembrane proteolysis. Important for normal cell division and sporulation. May act as a glucose exporter. This is Rhomboid protease GluP (gluP) from Bacillus subtilis (strain 168).